The primary structure comprises 273 residues: MGVYHADALVIRSREYGESDRLLTLFSREYGKIQAVAKGVRKPKSRQRAGAQLFTYAEYLLHKGKSLDTVNQVSPRESFPHLWTDLDMSMAATAMAELLDLATLPGQPHPELFTLTFSSLFLVESCDPALVQCTYALKLMNYLGYRPRLVECAECGQRVQGERLLFSPDAGGVVCRQCQTQGSSPAVGRWVSGGSLGLMRQLLQGELEKLNRLRWNQWSKKEILEASQYFCEQTLDKSLRSWSMGNRLVNVGQNPSGKDDLNERRDVDGTGES.

The tract at residues 250–273 (NVGQNPSGKDDLNERRDVDGTGES) is disordered. The segment covering 257–273 (GKDDLNERRDVDGTGES) has biased composition (basic and acidic residues).

Belongs to the RecO family.

Functionally, involved in DNA repair and RecF pathway recombination. This Desulfitobacterium hafniense (strain Y51) protein is DNA repair protein RecO.